A 591-amino-acid polypeptide reads, in one-letter code: Cytidine monophosphate-N-acetylneuraminic acid hydroxylase (591 aa).

One can recognise a Rieske domain in the interval 12–110 (LEAEDVRNLK…AVLSETDGSL (99 aa)). [2Fe-2S] cluster is bound by residues cysteine 52, histidine 54, cysteine 73, and histidine 76.

This sequence belongs to the CMP-Neu5Ac hydroxylase family. Requires [2Fe-2S] cluster as cofactor.

The protein resides in the cytoplasm. The catalysed reaction is CMP-N-acetyl-beta-neuraminate + 2 Fe(II)-[cytochrome b5] + O2 + 2 H(+) = CMP-N-glycoloyl-beta-neuraminate + 2 Fe(III)-[cytochrome b5] + H2O. It functions in the pathway amino-sugar metabolism; N-acetylneuraminate metabolism. Sialic acids are components of carbohydrate chains of glycoconjugates and are involved in cell-cell recognition and cell-pathogen interactions. Catalyzes the conversion of CMP-N-acetylneuraminic acid (CMP-Neu5Ac) into its hydroxylated derivative CMP-N-glycolylneuraminic acid (CMP-Neu5Gc), a sialic acid abundantly expressed at the surface of many cells. In Danio rerio (Zebrafish), this protein is Cytidine monophosphate-N-acetylneuraminic acid hydroxylase (cmah).